Consider the following 344-residue polypeptide: Uroporphyrinogen decarboxylase (344 aa).

Substrate is bound by residues 29 to 33 (RQAGR), Asp79, Tyr153, Ser208, and His324.

The protein belongs to the uroporphyrinogen decarboxylase family. As to quaternary structure, homodimer.

It is found in the cytoplasm. The enzyme catalyses uroporphyrinogen III + 4 H(+) = coproporphyrinogen III + 4 CO2. It functions in the pathway porphyrin-containing compound metabolism; protoporphyrin-IX biosynthesis; coproporphyrinogen-III from 5-aminolevulinate: step 4/4. Functionally, catalyzes the decarboxylation of four acetate groups of uroporphyrinogen-III to yield coproporphyrinogen-III. In Rhizorhabdus wittichii (strain DSM 6014 / CCUG 31198 / JCM 15750 / NBRC 105917 / EY 4224 / RW1) (Sphingomonas wittichii), this protein is Uroporphyrinogen decarboxylase.